The primary structure comprises 338 residues: Mitochondrial amidoxime reducing component 2 (338 aa).

The transit peptide at 1 to 35 directs the protein to the mitochondrion; it reads MGSSSSTALARLGLPGQPRSTWLGVAALGLAAVAL. Glycyl lysine isopeptide (Lys-Gly) (interchain with G-Cter in ubiquitin) cross-links involve residues Lys-59, Lys-138, and Lys-144. Lys-156 carries the post-translational modification N6-acetyllysine; alternate. Lys-156 participates in a covalent cross-link: Glycyl lysine isopeptide (Lys-Gly) (interchain with G-Cter in ubiquitin); alternate. Residues Lys-173, Lys-187, Lys-289, and Lys-296 each participate in a glycyl lysine isopeptide (Lys-Gly) (interchain with G-Cter in ubiquitin) cross-link. Residues 188–336 form the MOSC domain; the sequence is GRTTKKLYPS…LRVGDPVYRM (149 aa).

Component of a complex composed of cytochrome b5, NADH-cytochrome b5 reductase (CYB5R3) and MTARC2. It depends on Mo-molybdopterin as a cofactor. Post-translationally, ubiquitinated by PRKN during mitophagy, leading to its degradation and enhancement of mitophagy. Deubiquitinated by USP30.

Its subcellular location is the mitochondrion outer membrane. It localises to the peroxisome. The catalysed reaction is N(omega)-hydroxy-L-arginine + 2 Fe(II)-[cytochrome b5] + 2 H(+) = L-arginine + 2 Fe(III)-[cytochrome b5] + H2O. In terms of biological role, catalyzes the reduction of N-oxygenated molecules, acting as a counterpart of cytochrome P450 and flavin-containing monooxygenases in metabolic cycles. As a component of prodrug-converting system, reduces a multitude of N-hydroxylated prodrugs particularly amidoximes, leading to increased drug bioavailability. May be involved in mitochondrial N(omega)-hydroxy-L-arginine (NOHA) reduction, regulating endogenous nitric oxide levels and biosynthesis. Postulated to cleave the N-OH bond of N-hydroxylated substrates in concert with electron transfer from NADH to cytochrome b5 reductase then to cytochrome b5, the ultimate electron donor that primes the active site for substrate reduction. The chain is Mitochondrial amidoxime reducing component 2 (Mtarc2) from Rattus norvegicus (Rat).